Consider the following 89-residue polypeptide: Inner kinetochore subunit mhf2 (89 aa).

Belongs to the CENP-X/MHF2 family. In terms of assembly, the MHF histone-fold complex is a heterotetramer of 2 mhf1-mhf2 heterodimers. Component of the inner kinetochore constitutive centromere-associated network (CCAN) (also known as central kinetochore Sim4 complex in fission yeast), which is composed of at least cnl2, cnp3, cnp20, fta1, fta2, fta3, fta4, fta6, fta7, mal2, mhf1, mhf2, mis6, mis15, mis17, sim4 and wip1.

The protein localises to the nucleus. Its subcellular location is the cytoplasm. Its function is as follows. Component of a FANCM-MHF complex that promotes gene conversion at blocked replication forks, probably by reversal of the stalled fork. FANCM-MHF promotes non-crossover recombination. The protein is Inner kinetochore subunit mhf2 of Schizosaccharomyces pombe (strain 972 / ATCC 24843) (Fission yeast).